The following is a 205-amino-acid chain: Large ribosomal subunit protein uL4 (205 aa).

This sequence belongs to the universal ribosomal protein uL4 family. In terms of assembly, part of the 50S ribosomal subunit.

One of the primary rRNA binding proteins, this protein initially binds near the 5'-end of the 23S rRNA. It is important during the early stages of 50S assembly. It makes multiple contacts with different domains of the 23S rRNA in the assembled 50S subunit and ribosome. Its function is as follows. Forms part of the polypeptide exit tunnel. This chain is Large ribosomal subunit protein uL4, found in Dinoroseobacter shibae (strain DSM 16493 / NCIMB 14021 / DFL 12).